A 121-amino-acid chain; its full sequence is Large ribosomal subunit protein bL20 (121 aa).

Belongs to the bacterial ribosomal protein bL20 family.

In terms of biological role, binds directly to 23S ribosomal RNA and is necessary for the in vitro assembly process of the 50S ribosomal subunit. It is not involved in the protein synthesizing functions of that subunit. The protein is Large ribosomal subunit protein bL20 of Wolbachia pipientis subsp. Culex pipiens (strain wPip).